A 323-amino-acid polypeptide reads, in one-letter code: Acetyl-coenzyme A carboxylase carboxyl transferase subunit alpha (323 aa).

Residues 32-293 form the CoA carboxyltransferase C-terminal domain; that stretch reads NISEEVAKLQ…RKALAAQLES (262 aa).

Belongs to the AccA family. As to quaternary structure, acetyl-CoA carboxylase is a heterohexamer composed of biotin carboxyl carrier protein (AccB), biotin carboxylase (AccC) and two subunits each of ACCase subunit alpha (AccA) and ACCase subunit beta (AccD).

Its subcellular location is the cytoplasm. The enzyme catalyses N(6)-carboxybiotinyl-L-lysyl-[protein] + acetyl-CoA = N(6)-biotinyl-L-lysyl-[protein] + malonyl-CoA. Its pathway is lipid metabolism; malonyl-CoA biosynthesis; malonyl-CoA from acetyl-CoA: step 1/1. In terms of biological role, component of the acetyl coenzyme A carboxylase (ACC) complex. First, biotin carboxylase catalyzes the carboxylation of biotin on its carrier protein (BCCP) and then the CO(2) group is transferred by the carboxyltransferase to acetyl-CoA to form malonyl-CoA. The chain is Acetyl-coenzyme A carboxylase carboxyl transferase subunit alpha from Alcanivorax borkumensis (strain ATCC 700651 / DSM 11573 / NCIMB 13689 / SK2).